The primary structure comprises 432 residues: Adhesin YadA (432 aa).

An N-terminal signal peptide occupies residues Met1 to Ala25. The segment at Glu26–Tyr340 is surface exposed passenger domain. Positions Val242–Leu263 form a coiled coil. The tract at residues Thr341–Gly379 is outer membrane translocation of the passenger domain. 4 beta stranded membrane passes run Gly379–Gly389, Ser393–Val404, Lys411–Ala417, and Asn421–Trp432. The interval Lys380 to Trp432 is translocator domain.

This sequence belongs to the autotransporter-2 (AT-2) (TC 1.B.40) family. In terms of assembly, homotrimer.

The protein localises to the cell surface. It is found in the cell outer membrane. Functionally, collagen-binding outer membrane protein forming a fibrillar matrix on the bacterial cell surface. Promotes attachment to eukaryotic cells and after invasion, is the major adhesin in infected tissue. Constitutes an alternative uptake pathway under conditions in which invasin synthesis is repressed. The chain is Adhesin YadA (yadA) from Yersinia pseudotuberculosis serotype I (strain IP32953).